The chain runs to 343 residues: Phosphoribosylformylglycinamidine cyclo-ligase (343 aa).

The protein belongs to the AIR synthase family.

The protein resides in the cytoplasm. It carries out the reaction 2-formamido-N(1)-(5-O-phospho-beta-D-ribosyl)acetamidine + ATP = 5-amino-1-(5-phospho-beta-D-ribosyl)imidazole + ADP + phosphate + H(+). The protein operates within purine metabolism; IMP biosynthesis via de novo pathway; 5-amino-1-(5-phospho-D-ribosyl)imidazole from N(2)-formyl-N(1)-(5-phospho-D-ribosyl)glycinamide: step 2/2. The chain is Phosphoribosylformylglycinamidine cyclo-ligase from Carboxydothermus hydrogenoformans (strain ATCC BAA-161 / DSM 6008 / Z-2901).